Consider the following 68-residue polypeptide: Conotoxin Cal14.13b (68 aa).

The first 20 residues, 1-20 (MKLCVVIVLLMLAMPFNGGE), serve as a signal peptide directing secretion. Residues 21–68 (ASRFFNQHARSQRSGMKTRGIWCDPPCPEGETCRGGECSDEFNGDMGR) constitute a propeptide that is removed on maturation. Position 66 is a methionine amide (methionine 66).

Contains 2 disulfide bonds. As to expression, expressed by the venom duct.

Its subcellular location is the secreted. Functionally, probable neurotoxin with unknown target. Possibly targets ion channels. The sequence is that of Conotoxin Cal14.13b from Californiconus californicus (California cone).